Consider the following 418-residue polypeptide: Ig-like V-type domain-containing protein FAM187A (418 aa).

A signal peptide spans 1–18; sequence MRLAPTTVLLWAWGSLQA. At 19–376 the chain is on the extracellular side; it reads FEIVEKENIF…ASLSDPETRT (358 aa). The 95-residue stretch at 267 to 361 folds into the Ig-like V-type domain; the sequence is PWVPQVPIQF…IAGFRLGVTS (95 aa). A disulfide bond links C289 and C345. An N-linked (GlcNAc...) asparagine glycan is attached at N317. A helical membrane pass occupies residues 377–397; it reads AVELTLIGYLLIAVVFVTIHL. The Cytoplasmic segment spans residues 398–418; the sequence is CRCCCQSRCCPNFSAQTLLQL.

Belongs to the FAM187 family.

It is found in the membrane. The sequence is that of Ig-like V-type domain-containing protein FAM187A (Fam187a) from Rattus norvegicus (Rat).